A 422-amino-acid polypeptide reads, in one-letter code: 3-phosphoshikimate 1-carboxyvinyltransferase (422 aa).

3 residues coordinate 3-phosphoshikimate: Lys20, Ser21, and Arg25. Lys20 serves as a coordination point for phosphoenolpyruvate. Residues Gly92 and Arg120 each coordinate phosphoenolpyruvate. Residues Ser163, Ser164, Gln165, Ser191, Asp304, and Lys331 each contribute to the 3-phosphoshikimate site. Gln165 serves as a coordination point for phosphoenolpyruvate. Asp304 (proton acceptor) is an active-site residue. Arg335 and Arg377 together coordinate phosphoenolpyruvate.

This sequence belongs to the EPSP synthase family. As to quaternary structure, monomer.

The protein localises to the cytoplasm. It carries out the reaction 3-phosphoshikimate + phosphoenolpyruvate = 5-O-(1-carboxyvinyl)-3-phosphoshikimate + phosphate. It participates in metabolic intermediate biosynthesis; chorismate biosynthesis. Functionally, catalyzes the transfer of the enolpyruvyl moiety of phosphoenolpyruvate (PEP) to the 5-hydroxyl of shikimate-3-phosphate (S3P) to produce enolpyruvyl shikimate-3-phosphate and inorganic phosphate. This is 3-phosphoshikimate 1-carboxyvinyltransferase from Methanocorpusculum labreanum (strain ATCC 43576 / DSM 4855 / Z).